The primary structure comprises 178 residues: Cytochrome b6-f complex iron-sulfur subunit (178 aa).

A helical transmembrane segment spans residues 20–42 (LLTFGSVTGVALGALYPVVNYFI). The Rieske domain occupies 65 to 161 (ASGWLADHKE…VNVENDNVFV (97 aa)). Residues cysteine 107, histidine 109, cysteine 125, and histidine 128 each contribute to the [2Fe-2S] cluster site. Cysteine 112 and cysteine 127 are joined by a disulfide.

Belongs to the Rieske iron-sulfur protein family. In terms of assembly, the 4 large subunits of the cytochrome b6-f complex are cytochrome b6, subunit IV (17 kDa polypeptide, PetD), cytochrome f and the Rieske protein, while the 4 small subunits are PetG, PetL, PetM and PetN. The complex functions as a dimer. It depends on [2Fe-2S] cluster as a cofactor.

Its subcellular location is the cellular thylakoid membrane. The catalysed reaction is 2 oxidized [plastocyanin] + a plastoquinol + 2 H(+)(in) = 2 reduced [plastocyanin] + a plastoquinone + 4 H(+)(out). In terms of biological role, component of the cytochrome b6-f complex, which mediates electron transfer between photosystem II (PSII) and photosystem I (PSI), cyclic electron flow around PSI, and state transitions. In Synechococcus sp. (strain RCC307), this protein is Cytochrome b6-f complex iron-sulfur subunit.